We begin with the raw amino-acid sequence, 281 residues long: NADPH-dependent 7-cyano-7-deazaguanine reductase (281 aa).

A substrate-binding site is contributed by 87–89 (VES). 89 to 90 (SK) is a binding site for NADPH. Residue Cys-188 is the Thioimide intermediate of the active site. The active-site Proton donor is the Asp-195. 227 to 228 (HE) is a binding site for substrate. 256–257 (RG) provides a ligand contact to NADPH.

Belongs to the GTP cyclohydrolase I family. QueF type 2 subfamily. In terms of assembly, homodimer.

It localises to the cytoplasm. The catalysed reaction is 7-aminomethyl-7-carbaguanine + 2 NADP(+) = 7-cyano-7-deazaguanine + 2 NADPH + 3 H(+). The protein operates within tRNA modification; tRNA-queuosine biosynthesis. Its function is as follows. Catalyzes the NADPH-dependent reduction of 7-cyano-7-deazaguanine (preQ0) to 7-aminomethyl-7-deazaguanine (preQ1). The polypeptide is NADPH-dependent 7-cyano-7-deazaguanine reductase (Aliivibrio fischeri (strain ATCC 700601 / ES114) (Vibrio fischeri)).